A 173-amino-acid polypeptide reads, in one-letter code: NADH-ubiquinone oxidoreductase chain 6 (173 aa).

The next 6 helical transmembrane spans lie at 1–21 (MTYFVVFLGLCFVLGGLAVAS), 27–47 (YGVVGLVLASVAGCGWLLSLG), 48–68 (VSFVSLVLFMVYLGGMLVVFV), 87–107 (VVGYGMSFIVVLVVGVVVGGF), 113–133 (FGVVTVDSAGVFFARLDFSGV), and 139–159 (CGVGMFLVAGWGLLLTLFVVL).

It belongs to the complex I subunit 6 family.

It localises to the mitochondrion membrane. It catalyses the reaction a ubiquinone + NADH + 5 H(+)(in) = a ubiquinol + NAD(+) + 4 H(+)(out). Core subunit of the mitochondrial membrane respiratory chain NADH dehydrogenase (Complex I) that is believed to belong to the minimal assembly required for catalysis. Complex I functions in the transfer of electrons from NADH to the respiratory chain. The immediate electron acceptor for the enzyme is believed to be ubiquinone. The polypeptide is NADH-ubiquinone oxidoreductase chain 6 (MT-ND6) (Cepphus grylle (Black guillemot)).